The chain runs to 212 residues: Endothelin-1 (212 aa).

Positions 1 to 17 are cleaved as a signal peptide; the sequence is MDYLLMIFSLLFVACQG. Positions 18–50 are excised as a propeptide; the sequence is APETAVLGAELSAVGENGGEKPTPSPPWRLRRS. Intrachain disulfides connect C53–C67 and C55–C63. Positions 74 to 212 are excised as a propeptide; sequence VNTPEHVVPY…RYVTHNRAHW (139 aa). Residues 109–123 form an endothelin-like region; it reads CQCASQKDKKCWNFC. Basic and acidic residues-rich tracts occupy residues 168–181 and 189–205; these read RSSEEHLRQTRSET and SFHDPKLKGKPSRERYV. Residues 168–212 are disordered; sequence RSSEEHLRQTRSETMRNSVKSSFHDPKLKGKPSRERYVTHNRAHW.

The protein belongs to the endothelin/sarafotoxin family. Expressed in lung, placental stem villi vessels and in cultured placental vascular smooth muscle cells.

Its subcellular location is the secreted. Functionally, endothelins are endothelium-derived vasoconstrictor peptides. Probable ligand for G-protein coupled receptors EDNRA and EDNRB which activates PTK2B, BCAR1, BCAR3 and, GTPases RAP1 and RHOA cascade in glomerular mesangial cells. Also binds the DEAR/FBXW7-AS1 receptor. Promotes mesenteric arterial wall remodeling via activation of ROCK signaling and subsequent colocalization of NFATC3 with F-actin filaments. NFATC3 then translocates to the nucleus where it subsequently promotes the transcription of the smooth muscle hypertrophy and differentiation marker ACTA2. This Homo sapiens (Human) protein is Endothelin-1 (EDN1).